An 821-amino-acid chain; its full sequence is Lysosomal beta glucosidase (821 aa).

Residues 1 to 24 (MKTIKSLFLLSLLIVNLLISSTYG) form the signal peptide. A propeptide spanning residues 25–69 (SSIRVSIVGGEEAEVIEKPRTFGNKRELKLEYSQIYPKKQLNQEN) is cleaved from the precursor. 3 N-linked (GlcNAc...) asparagine glycosylation sites follow: N113, N146, and N266. D363 is a catalytic residue. Residues N535, N555, N703, and N721 are each glycosylated (N-linked (GlcNAc...) asparagine).

It belongs to the glycosyl hydrolase 3 family. In terms of processing, glycosylated. The polyoligosaccharides are of the high-mannose type and are highly substituted with both phosphate and sulfate moieties.

The protein resides in the lysosome. The enzyme catalyses Hydrolysis of terminal, non-reducing beta-D-glucosyl residues with release of beta-D-glucose.. This chain is Lysosomal beta glucosidase (gluA), found in Dictyostelium discoideum (Social amoeba).